The sequence spans 371 residues: Phospholipid-transporting ATPase accessory subunit ivn1 (371 aa).

The Cytoplasmic segment spans residues 1 to 39; the sequence is MSQTEIVKKPKHKRFKRPDKSRFVQQTLPAWQFIFTPWT. Residues 40-60 traverse the membrane as a helical segment; that stretch reads VLPLLFLLGIVFAPLGAGMFV. Residues 61–325 are Extracellular-facing; it reads ASRRVKELRI…STTSVIGGKN (265 aa). 2 disulfides stabilise this stretch: Cys75–Cys111 and Cys166–Cys181. A glycan (N-linked (GlcNAc...) asparagine) is linked at Asn99. 6 N-linked (GlcNAc...) asparagine glycosylation sites follow: Asn190, Asn212, Asn216, Asn233, Asn284, and Asn297. Residues 326–346 traverse the membrane as a helical segment; that stretch reads YFLGILYFVIGGLCAASGVIL. The Cytoplasmic segment spans residues 347-371; it reads SIACLIKPRRVGDPRYLSWNRGKSS.

The protein belongs to the CDC50/LEM3 family.

It localises to the endoplasmic reticulum membrane. In terms of biological role, accessory component of a P4-ATPase flippase complex which catalyzes the hydrolysis of ATP coupled to the transport of aminophospholipids from the lumenal to the cytosolic leaflet of membranes and ensures the maintenance of asymmetric distribution of phospholipids. This is Phospholipid-transporting ATPase accessory subunit ivn1 (ivn1) from Schizosaccharomyces pombe (strain 972 / ATCC 24843) (Fission yeast).